A 170-amino-acid polypeptide reads, in one-letter code: Negative modulator of initiation of replication (170 aa).

Positions 139-145 are interaction with DNA; the sequence is NTNTGRK.

This sequence belongs to the SeqA family. As to quaternary structure, homodimer. Polymerizes to form helical filaments.

The protein localises to the cytoplasm. In terms of biological role, negative regulator of replication initiation, which contributes to regulation of DNA replication and ensures that replication initiation occurs exactly once per chromosome per cell cycle. Binds to pairs of hemimethylated GATC sequences in the oriC region, thus preventing assembly of replication proteins and re-initiation at newly replicated origins. Repression is relieved when the region becomes fully methylated. This chain is Negative modulator of initiation of replication, found in Tolumonas auensis (strain DSM 9187 / NBRC 110442 / TA 4).